The following is a 385-amino-acid chain: Phosphotransferase FrzJ (385 aa).

Residues Asn38 and Lys59 each coordinate ATP. Asp245 is a catalytic residue.

It belongs to the methylthioribose kinase family. Monomer.

The enzyme catalyses (1S,3S,6S,7S,8S,9S)-6-[(4-methoxyphenyl)methyl]-3-(methylamino)-5-azatricyclo[6.3.1.0(1,5)]dodecane-7,9-diol + ATP = (-)-FR901483 + ADP + 2 H(+). It functions in the pathway secondary metabolite biosynthesis. Its function is as follows. Phosphotransferase; part of the gene cluster that mediates the biosynthesis of the alkaloid (-)-FR901483, a potent immunosuppressant that shows efficacy in animal models and a probable inhibitor of purine nucleotide biosynthesis by targeting phosphoribosylpyrophosphate amidotransferase (PPAT). FrzJ catalyzes the last step of the pathway by phosphorylating the C4'-OH of dephospho-(-)-FR901483 to produce (-)-FR901483. The biosynthesis of (-)-FR901483 starts with the condensation of two L-tyrosines to yield (S,S)-dityrosyl-piperazine. This process occurs in 3 steps with the non-canonical nonribosomal peptide synthetase FrzA catalyzing the reduction of L-tyrosine into L-tyrosinal, the spontaneous condensation of 2 L-tyrosinal units, and the subsequent reduction by the NmrA-like family domain-containing oxidoreductase FrzB. The cytochrome P450 monooxygenase FrzC then performs coupling between N10 and C1' to morph the piperazine into a 1,4-diazabicyclo[3.2.1]octane spiro-fused to a 2,5-cyclohexadienone. The dienone portion is further reduced to cyclohexanone by the flavin-dependent reductase FrzD. The methyltranserases (MTs) FrzE and FrzF are then involved in the methylation at the C10' amine and the C4 phenolic oxygen, respectively. The order of the two MTs appear to be interchangeable. Cleavage of the C9-N10' bond by the dioxygenase FrzG then leads to formation of a conjugated iminium. In addition to the oxidation of C9, an additional dehydrogenation between C7 and C8 can occur to give a likely shunt product. The next biosynthetic step is the intramolecular aldol condensation catalyzed by the newly identified aldolase FrzH to yield an aza-tricyclic product with the formation of a C9-C3' bond. The short-chain dehydrogenase/reductase FrzI then produces dephospho-(-)-FR901483 that is phosphorylated at C4'-OH into (-)-FR901483 by the phosphotransferase FrzJ. This Cladobotryum sp protein is Phosphotransferase FrzJ.